Consider the following 452-residue polypeptide: Ribosomal protein uS12 methylthiotransferase RimO (452 aa).

The MTTase N-terminal domain occupies 3 to 122 (LTVGLISLGC…LPEIITQVMD (120 aa)). 6 residues coordinate [4Fe-4S] cluster: cysteine 12, cysteine 48, cysteine 85, cysteine 162, cysteine 166, and cysteine 169. A Radical SAM core domain is found at 148–392 (LTPPHTAYIK…TLLLARLASE (245 aa)). The 58-residue stretch at 395–452 (QEQIGRQIRVLVDAPGVARTEWDAPDIDGTVSVPLTLPVGQFATVTVTDAVAYELTAE) folds into the TRAM domain.

It belongs to the methylthiotransferase family. RimO subfamily. It depends on [4Fe-4S] cluster as a cofactor.

It localises to the cytoplasm. The catalysed reaction is L-aspartate(89)-[ribosomal protein uS12]-hydrogen + (sulfur carrier)-SH + AH2 + 2 S-adenosyl-L-methionine = 3-methylsulfanyl-L-aspartate(89)-[ribosomal protein uS12]-hydrogen + (sulfur carrier)-H + 5'-deoxyadenosine + L-methionine + A + S-adenosyl-L-homocysteine + 2 H(+). Functionally, catalyzes the methylthiolation of an aspartic acid residue of ribosomal protein uS12. The polypeptide is Ribosomal protein uS12 methylthiotransferase RimO (Akkermansia muciniphila (strain ATCC BAA-835 / DSM 22959 / JCM 33894 / BCRC 81048 / CCUG 64013 / CIP 107961 / Muc)).